We begin with the raw amino-acid sequence, 275 residues long: Exosome complex component Rrp42 (275 aa).

Belongs to the RNase PH family. Rrp42 subfamily. In terms of assembly, component of the archaeal exosome complex. Forms a hexameric ring-like arrangement composed of 3 Rrp41-Rrp42 heterodimers. The hexameric ring associates with a trimer of Rrp4 and/or Csl4 subunits.

The protein resides in the cytoplasm. Non-catalytic component of the exosome, which is a complex involved in RNA degradation. Contributes to the structuring of the Rrp41 active site. The polypeptide is Exosome complex component Rrp42 (Saccharolobus islandicus (strain L.S.2.15 / Lassen #1) (Sulfolobus islandicus)).